The following is a 220-amino-acid chain: Large ribosomal subunit protein uL3 (220 aa).

The tract at residues 126–158 is disordered; that stretch reads GFQGAIKRHGQSRGPMSHGSRYHRRPGSMGMAS.

This sequence belongs to the universal ribosomal protein uL3 family. Part of the 50S ribosomal subunit. Forms a cluster with proteins L14 and L19.

Functionally, one of the primary rRNA binding proteins, it binds directly near the 3'-end of the 23S rRNA, where it nucleates assembly of the 50S subunit. The polypeptide is Large ribosomal subunit protein uL3 (Macrococcus caseolyticus (strain JCSC5402) (Macrococcoides caseolyticum)).